The following is a 253-amino-acid chain: HTH-type transcriptional activator TipA (253 aa).

The 71-residue stretch at 1 to 71 (MSYSVGQVAG…LDEVAALLDD (71 aa)) folds into the HTH merR-type domain. Positions 5 to 24 (VGQVAGFAGVTVRTLHHYDD) form a DNA-binding region, H-T-H motif.

Homodimer.

Transcriptional activator. Is activated when bound to the antibiotic thiostrepton. This Streptomyces coelicolor (strain ATCC BAA-471 / A3(2) / M145) protein is HTH-type transcriptional activator TipA (tipA).